The sequence spans 175 residues: MALRLDDKKAVVAEVAAVAARAHSAVAAEYRGLSVSALTQLRKEARESGVYLRVVKNTLARKAVEGTGFECMQDGLVGPLILAFSLEDPGSAARVVSAFAKTNDKLVVKLVAVGGKQYGPSELERLASLPNREQAISMLMGTMKAPIEKFVRTLAEPHAKFVRTLAAVRDQKQAA.

The protein belongs to the universal ribosomal protein uL10 family. As to quaternary structure, part of the ribosomal stalk of the 50S ribosomal subunit. The N-terminus interacts with L11 and the large rRNA to form the base of the stalk. The C-terminus forms an elongated spine to which L12 dimers bind in a sequential fashion forming a multimeric L10(L12)X complex.

In terms of biological role, forms part of the ribosomal stalk, playing a central role in the interaction of the ribosome with GTP-bound translation factors. This Methylococcus capsulatus (strain ATCC 33009 / NCIMB 11132 / Bath) protein is Large ribosomal subunit protein uL10.